We begin with the raw amino-acid sequence, 813 residues long: Homeobox-leucine zipper protein ROC4 (813 aa).

Positions 62–112 (EVENEMSRSGSDHLDVVSCGDAGGGGGDDDDDEDAEHGNPPKRKKRYHRHT) are disordered. Over residues 101–112 (PPKRKKRYHRHT) the composition is skewed to basic residues. The homeobox DNA-binding region spans 104–163 (RKKRYHRHTPQQIQELEAMFKECPHPDEKQRAELSKRLGLEPRQVKFWFQNRRTQMKMQL). A coiled-coil region spans residues 152-191 (FQNRRTQMKMQLERHENSLLKQENDKLRSENLSIREATSN). Residues 306–559 (AGIDKSLFLE…LQRQCECLAL (254 aa)) enclose the START domain.

The protein belongs to the HD-ZIP homeobox family. Class IV subfamily.

The protein localises to the nucleus. Functionally, probable transcription factor. This chain is Homeobox-leucine zipper protein ROC4 (ROC4), found in Oryza sativa subsp. japonica (Rice).